A 219-amino-acid chain; its full sequence is MTPVKVFGPAQSTNVARVLLCLEEVGAEYEVVNVDFTVMEHKSPEHLKRNPFGQIPAFQDGDLYLFESRAIGKYILRKYKTREADLLREGNLREAAMVDVWTEVETHQYNSAISPIVYECIINPAMRGIPTNQKVVDESAEKLKKVLEVYEARLSQSTYLAGDFVSFADLNHFPYTFYFMGTPYASLFDSYPHVKAWWERLMARPSVKKLAAVMAPQGA.

The region spanning 2–83 (TPVKVFGPAQ…YILRKYKTRE (82 aa)) is the GST N-terminal domain. Glutathione contacts are provided by residues S12, 41-42 (HK), 54-55 (QI), and 67-68 (ES). The GST C-terminal domain maps to 91-219 (NLREAAMVDV…LAAVMAPQGA (129 aa)).

Belongs to the GST superfamily. Phi family. Constitutively expressed in roots.

It catalyses the reaction RX + glutathione = an S-substituted glutathione + a halide anion + H(+). Its function is as follows. Conjugation of reduced glutathione to a wide number of exogenous and endogenous hydrophobic electrophiles. The polypeptide is Probable glutathione S-transferase GSTF1 (GSTF1) (Oryza sativa subsp. japonica (Rice)).